The following is a 409-amino-acid chain: Peptidase T (409 aa).

His-78 contacts Zn(2+). Residue Asp-80 is part of the active site. Position 140 (Asp-140) interacts with Zn(2+). Glu-173 functions as the Proton acceptor in the catalytic mechanism. Zn(2+) contacts are provided by Glu-174, Asp-196, and His-379.

It belongs to the peptidase M20B family. It depends on Zn(2+) as a cofactor.

It is found in the cytoplasm. The enzyme catalyses Release of the N-terminal residue from a tripeptide.. Cleaves the N-terminal amino acid of tripeptides. In Salmonella paratyphi C (strain RKS4594), this protein is Peptidase T.